A 408-amino-acid chain; its full sequence is Dual-specificity RNA methyltransferase RlmN (408 aa).

The Proton acceptor role is filled by Glu93. The Radical SAM core domain maps to 99 to 379 (ETNRGTLCIS…TTTRKTRGDD (281 aa)). The cysteines at positions 106 and 384 are disulfide-linked. Residues Cys113, Cys117, and Cys120 each coordinate [4Fe-4S] cluster. Residues 152 to 196 (SPAGSKDGDGGPDHASRATKLDHRAADAKGVQSDSWRSSDPEEDH) are disordered. Residues 157-178 (KDGDGGPDHASRATKLDHRAAD) show a composition bias toward basic and acidic residues. S-adenosyl-L-methionine is bound by residues 210–211 (GE), Ser242, 264–266 (SLH), and Asn341. Residue Cys384 is the S-methylcysteine intermediate of the active site.

Belongs to the radical SAM superfamily. RlmN family. The cofactor is [4Fe-4S] cluster.

It localises to the cytoplasm. It carries out the reaction adenosine(2503) in 23S rRNA + 2 reduced [2Fe-2S]-[ferredoxin] + 2 S-adenosyl-L-methionine = 2-methyladenosine(2503) in 23S rRNA + 5'-deoxyadenosine + L-methionine + 2 oxidized [2Fe-2S]-[ferredoxin] + S-adenosyl-L-homocysteine. The catalysed reaction is adenosine(37) in tRNA + 2 reduced [2Fe-2S]-[ferredoxin] + 2 S-adenosyl-L-methionine = 2-methyladenosine(37) in tRNA + 5'-deoxyadenosine + L-methionine + 2 oxidized [2Fe-2S]-[ferredoxin] + S-adenosyl-L-homocysteine. Its function is as follows. Specifically methylates position 2 of adenine 2503 in 23S rRNA and position 2 of adenine 37 in tRNAs. m2A2503 modification seems to play a crucial role in the proofreading step occurring at the peptidyl transferase center and thus would serve to optimize ribosomal fidelity. The polypeptide is Dual-specificity RNA methyltransferase RlmN (Aromatoleum aromaticum (strain DSM 19018 / LMG 30748 / EbN1) (Azoarcus sp. (strain EbN1))).